A 187-amino-acid chain; its full sequence is Threonylcarbamoyl-AMP synthase (187 aa).

A YrdC-like domain is found at 4 to 187 (TLDLDRAVAA…DARSGQILRD (184 aa)).

Belongs to the SUA5 family. TsaC subfamily.

It is found in the cytoplasm. The enzyme catalyses L-threonine + hydrogencarbonate + ATP = L-threonylcarbamoyladenylate + diphosphate + H2O. Its function is as follows. Required for the formation of a threonylcarbamoyl group on adenosine at position 37 (t(6)A37) in tRNAs that read codons beginning with adenine. Catalyzes the conversion of L-threonine, HCO(3)(-)/CO(2) and ATP to give threonylcarbamoyl-AMP (TC-AMP) as the acyladenylate intermediate, with the release of diphosphate. This is Threonylcarbamoyl-AMP synthase from Xanthomonas axonopodis pv. citri (strain 306).